Reading from the N-terminus, the 233-residue chain is Putative N-acetylmuramoyl-L-alanine amidase (233 aa).

The MurNAc-LAA domain maps to 1 to 219 (MIDPGHGGQD…IANAIYIALK (219 aa)).

It belongs to the N-acetylmuramoyl-L-alanine amidase 3 family.

The protein localises to the secreted. The enzyme catalyses Hydrolyzes the link between N-acetylmuramoyl residues and L-amino acid residues in certain cell-wall glycopeptides.. Its function is as follows. Cell-wall hydrolase involved in septum cleavage during cell division. The sequence is that of Putative N-acetylmuramoyl-L-alanine amidase (amiB) from Buchnera aphidicola subsp. Schizaphis graminum (strain Sg).